Consider the following 397-residue polypeptide: Putative 8-amino-7-oxononanoate synthase (397 aa).

Arg-22 is a binding site for substrate. A pyridoxal 5'-phosphate-binding site is contributed by 109 to 110 (GW). His-139 is a substrate binding site. Residues Ser-187, 212–215 (DEAH), and 241–244 (TFSK) each bind pyridoxal 5'-phosphate. An N6-(pyridoxal phosphate)lysine modification is found at Lys-244. Residue Thr-358 participates in substrate binding.

This sequence belongs to the class-II pyridoxal-phosphate-dependent aminotransferase family. BioF subfamily. Homodimer. The cofactor is pyridoxal 5'-phosphate.

It catalyses the reaction 6-carboxyhexanoyl-[ACP] + L-alanine + H(+) = (8S)-8-amino-7-oxononanoate + holo-[ACP] + CO2. The protein operates within cofactor biosynthesis; biotin biosynthesis. Functionally, catalyzes the decarboxylative condensation of pimeloyl-[acyl-carrier protein] and L-alanine to produce 8-amino-7-oxononanoate (AON), [acyl-carrier protein], and carbon dioxide. The sequence is that of Putative 8-amino-7-oxononanoate synthase (bioF) from Bordetella parapertussis (strain 12822 / ATCC BAA-587 / NCTC 13253).